The following is a 98-amino-acid chain: Putative transcriptional regulator YdaS (98 aa).

Functionally, when overexpressed, it induces Rac prophage excision, possibly to counteract the lethal toxicity of YdaT. Overexpression of ydaS or ydaST reduces growth and leads to loss of cell viability. May contribute to toxicity and morphological defects. The sequence is that of Putative transcriptional regulator YdaS (ydaS) from Escherichia coli (strain K12).